Consider the following 380-residue polypeptide: Cytochrome b (380 aa).

4 consecutive transmembrane segments (helical) span residues 33–53, 77–98, 113–133, and 178–198; these read FGSL…FLAM, WLIR…YLHV, WNIG…GYVL, and FFAF…IHLL. Positions 83 and 97 each coordinate heme b. The heme b site is built by histidine 182 and histidine 196. Histidine 201 provides a ligand contact to a ubiquinone. 4 consecutive transmembrane segments (helical) span residues 226-246, 288-308, 320-340, and 347-367; these read YKDL…ALFS, LGGV…PMLH, LSQI…WIGG, and FVLI…IALP.

This sequence belongs to the cytochrome b family. As to quaternary structure, the cytochrome bc1 complex contains 3 respiratory subunits (MT-CYB, CYC1 and UQCRFS1), 2 core proteins (UQCRC1 and UQCRC2) and probably 6 low-molecular weight proteins. It depends on heme b as a cofactor.

It localises to the mitochondrion inner membrane. In terms of biological role, component of the ubiquinol-cytochrome c reductase complex (complex III or cytochrome b-c1 complex) that is part of the mitochondrial respiratory chain. The b-c1 complex mediates electron transfer from ubiquinol to cytochrome c. Contributes to the generation of a proton gradient across the mitochondrial membrane that is then used for ATP synthesis. The sequence is that of Cytochrome b (mt-cyb) from Acipenser persicus (Persian sturgeon).